A 187-amino-acid chain; its full sequence is Large ribosomal subunit protein uL22A (187 aa).

It belongs to the universal ribosomal protein uL22 family. In terms of assembly, component of the large ribosomal subunit (LSU). Mature yeast ribosomes consist of a small (40S) and a large (60S) subunit. The 40S small subunit contains 1 molecule of ribosomal RNA (18S rRNA) and at least 33 different proteins. The large 60S subunit contains 3 rRNA molecules (25S, 5.8S and 5S rRNA) and at least 46 different proteins. uL22 is associated with the polypeptide exit tunnel.

It localises to the cytoplasm. Functionally, component of the ribosome, a large ribonucleoprotein complex responsible for the synthesis of proteins in the cell. The small ribosomal subunit (SSU) binds messenger RNAs (mRNAs) and translates the encoded message by selecting cognate aminoacyl-transfer RNA (tRNA) molecules. The large subunit (LSU) contains the ribosomal catalytic site termed the peptidyl transferase center (PTC), which catalyzes the formation of peptide bonds, thereby polymerizing the amino acids delivered by tRNAs into a polypeptide chain. The nascent polypeptides leave the ribosome through a tunnel in the LSU and interact with protein factors that function in enzymatic processing, targeting, and the membrane insertion of nascent chains at the exit of the ribosomal tunnel. The sequence is that of Large ribosomal subunit protein uL22A (rpl1701) from Schizosaccharomyces pombe (strain 972 / ATCC 24843) (Fission yeast).